The sequence spans 728 residues: Catalase-peroxidase (728 aa).

The tryptophyl-tyrosyl-methioninium (Trp-Tyr) (with M-244) cross-link spans 91-218; it reads WHSAGTYRTA…LAAVQMGLIY (128 aa). H92 functions as the Proton acceptor in the catalytic mechanism. Residues 218–244 constitute a cross-link (tryptophyl-tyrosyl-methioninium (Tyr-Met) (with W-91)); that stretch reads YVNPEGPDGNPDPVAAARDIRDTFARM. Heme b is bound at residue H259.

It belongs to the peroxidase family. Peroxidase/catalase subfamily. Homodimer or homotetramer. Heme b serves as cofactor. Formation of the three residue Trp-Tyr-Met cross-link is important for the catalase, but not the peroxidase activity of the enzyme.

It carries out the reaction H2O2 + AH2 = A + 2 H2O. It catalyses the reaction 2 H2O2 = O2 + 2 H2O. Bifunctional enzyme with both catalase and broad-spectrum peroxidase activity. The protein is Catalase-peroxidase of Burkholderia thailandensis (strain ATCC 700388 / DSM 13276 / CCUG 48851 / CIP 106301 / E264).